We begin with the raw amino-acid sequence, 686 residues long: Phosphatidylinositol 4,5-bisphosphate-binding protein SLM1 (686 aa).

Residues 33 to 147 (RSMTSADHAN…KQLQGKNSLT (115 aa)) are disordered. Residues 45-63 (QQQQQQQQQQQQQQQQQQQ) are compositionally biased toward low complexity. A compositionally biased stretch (polar residues) spans 64–126 (SASFQNGSLT…PNIDSNTNVT (63 aa)). Positions 133-144 (NNNNGKQLQGKN) are enriched in low complexity. 3 positions are modified to phosphoserine: serine 145, serine 150, and serine 153. A compositionally biased stretch (low complexity) spans 157–172 (SSLQRQRLAQQQQQQQ). The tract at residues 157–176 (SSLQRQRLAQQQQQQQDPRS) is disordered. The stretch at 296–381 (RLEDLRRDLI…FLHEAFDNLE (86 aa)) forms a coiled coil. The 114-residue stretch at 468-581 (YEIKSGFLER…WFDNLKILTS (114 aa)) folds into the PH domain. Positions 626–669 (VENDENDDINSNYVGSTVTPKLDNQTNTNTSMSSLPDTNDSELQ) are disordered. Residues 634 to 663 (INSNYVGSTVTPKLDNQTNTNTSMSSLPDT) are compositionally biased toward polar residues. The PXIXIT-like, required for interaction with CNA1 and CNA2, and calcineurin-dependent dephosphorylation signature appears at 673–678 (PNIYIQ).

In terms of assembly, heterodimer of SLM1-SLM2. Binds phosphatidylinositol 4,5-bisphosphate, which is required for function. Interacts with the TORC2 subunits AVO2, BIT61 and TOR2. Interacts with the calcineurin catalytic subunits CNA1 and CNA2. In terms of processing, phosphorylated by the target of rapamycin complex 2 (TORC2) and dephosphorylated by serine/threonine-protein phosphatase 2B (calcineurin). Dephosphorylated in response to the disruption or inhibition of sphingolipid synthesis.

It is found in the cell membrane. Functionally, together with SLM2, acts as an effector of the TORC2- and calcineurin-signaling pathways. Phosphorylated and activated by TORC2 under favorable growth conditions. Mediates actin polarization via inhibition of calcineurin-dependent transcription. Upon nutrient limitation or environmental stress, gets dephosphorylated by calcineurin. Dephosphorylation inhibits its interaction with TORC2, thereby antagonizing TORC2 signaling and mediating calcineurin-dependent actin depolarization. May play a role in the response to the disruption of sphingolipid synthesis, where dephosphorylation of SLM1 leads to the activation and phosphorylation of YPK1 through the TORC2 and PKH1 pathways, which in turn phosphorylates ORM1 and LAG1 to activate sphingolipid synthesis. Also functions in heat-induced, calcineurin-mediated uracil permease (FUR4) endocytosis. This is Phosphatidylinositol 4,5-bisphosphate-binding protein SLM1 (SLM1) from Saccharomyces cerevisiae (strain ATCC 204508 / S288c) (Baker's yeast).